The primary structure comprises 791 residues: Disintegrin and metalloproteinase domain-containing protein 1a (791 aa).

Residues 1–65 (MSVAAAGRGF…LLIFLPSTFC (65 aa)) form the signal peptide. The N-linked (GlcNAc...) asparagine glycan is linked to N72. The disordered stretch occupies residues 201–220 (CSVTPKDSPGDTSHPPRSRK). One can recognise a Peptidase M12B domain in the interval 235-429 (KYVEMFVVVN…HRGACLLDEP (195 aa)). An N-linked (GlcNAc...) asparagine glycan is attached at N256. 3 disulfide bridges follow: C345-C424, C385-C408, and C387-C393. H370 lines the Zn(2+) pocket. E371 is a catalytic residue. Zn(2+) contacts are provided by H374 and H380. Residues N407 and N484 are each glycosylated (N-linked (GlcNAc...) asparagine). In terms of domain architecture, Disintegrin spans 438-522 (AANCGNGVVE…ECPANSYMQD (85 aa)). A disulfide bridge links C494 with C514. N-linked (GlcNAc...) asparagine glycosylation occurs at N630. One can recognise an EGF-like domain in the interval 663-697 (LQYNCEPQEMCHGNGVCNNFKHCHCDAGFAPPDCS). 3 disulfide bridges follow: C667–C679, C673–C685, and C687–C696. A helical transmembrane segment spans residues 741-761 (VMVLVVPIFLVVLLCCLMLIA). Residues 762 to 791 (YLWSEVQEVVSPPSSSESSSSSSWSDSDSQ) are Cytoplasmic-facing. A disordered region spans residues 772-791 (SPPSSSESSSSSSWSDSDSQ).

Heterodimer with ADAM2/fertilin subunit beta. As to expression, testis.

The protein resides in the membrane. May be involved in sperm-egg fusion. The polypeptide is Disintegrin and metalloproteinase domain-containing protein 1a (Adam1a) (Mus musculus (Mouse)).